We begin with the raw amino-acid sequence, 171 residues long: 3-hydroxydecanoyl-[acyl-carrier-protein] dehydratase (171 aa).

Residue His-70 is part of the active site.

This sequence belongs to the thioester dehydratase family. FabA subfamily. As to quaternary structure, homodimer.

It localises to the cytoplasm. The enzyme catalyses a (3R)-hydroxyacyl-[ACP] = a (2E)-enoyl-[ACP] + H2O. It catalyses the reaction (3R)-hydroxydecanoyl-[ACP] = (2E)-decenoyl-[ACP] + H2O. It carries out the reaction (2E)-decenoyl-[ACP] = (3Z)-decenoyl-[ACP]. Its pathway is lipid metabolism; fatty acid biosynthesis. Its function is as follows. Necessary for the introduction of cis unsaturation into fatty acids. Catalyzes the dehydration of (3R)-3-hydroxydecanoyl-ACP to E-(2)-decenoyl-ACP and then its isomerization to Z-(3)-decenoyl-ACP. Can catalyze the dehydratase reaction for beta-hydroxyacyl-ACPs with saturated chain lengths up to 16:0, being most active on intermediate chain length. This is 3-hydroxydecanoyl-[acyl-carrier-protein] dehydratase from Shewanella oneidensis (strain ATCC 700550 / JCM 31522 / CIP 106686 / LMG 19005 / NCIMB 14063 / MR-1).